The sequence spans 288 residues: Phosphatidylserine decarboxylase proenzyme (288 aa).

Residues D91, H148, and S254 each act as charge relay system; for autoendoproteolytic cleavage activity in the active site. The Schiff-base intermediate with substrate; via pyruvic acid; for decarboxylase activity role is filled by S254. Position 254 is a pyruvic acid (Ser); by autocatalysis (S254).

It belongs to the phosphatidylserine decarboxylase family. PSD-B subfamily. Prokaryotic type I sub-subfamily. As to quaternary structure, heterodimer of a large membrane-associated beta subunit and a small pyruvoyl-containing alpha subunit. The cofactor is pyruvate. In terms of processing, is synthesized initially as an inactive proenzyme. Formation of the active enzyme involves a self-maturation process in which the active site pyruvoyl group is generated from an internal serine residue via an autocatalytic post-translational modification. Two non-identical subunits are generated from the proenzyme in this reaction, and the pyruvate is formed at the N-terminus of the alpha chain, which is derived from the carboxyl end of the proenzyme. The autoendoproteolytic cleavage occurs by a canonical serine protease mechanism, in which the side chain hydroxyl group of the serine supplies its oxygen atom to form the C-terminus of the beta chain, while the remainder of the serine residue undergoes an oxidative deamination to produce ammonia and the pyruvoyl prosthetic group on the alpha chain. During this reaction, the Ser that is part of the protease active site of the proenzyme becomes the pyruvoyl prosthetic group, which constitutes an essential element of the active site of the mature decarboxylase.

The protein resides in the cell membrane. It catalyses the reaction a 1,2-diacyl-sn-glycero-3-phospho-L-serine + H(+) = a 1,2-diacyl-sn-glycero-3-phosphoethanolamine + CO2. Its pathway is phospholipid metabolism; phosphatidylethanolamine biosynthesis; phosphatidylethanolamine from CDP-diacylglycerol: step 2/2. Catalyzes the formation of phosphatidylethanolamine (PtdEtn) from phosphatidylserine (PtdSer). The polypeptide is Phosphatidylserine decarboxylase proenzyme (Pseudoalteromonas translucida (strain TAC 125)).